Reading from the N-terminus, the 842-residue chain is Xyloglucanase Xgh74A (842 aa).

A signal peptide spans 1-32 (MVKKFTSKIKAAVFAAVVAATAIFGPAISSQA). Residue Asp-70 is the Nucleophile of the active site. 4 BNR repeats span residues 134–144 (RSTDRGETWEK), 185–196 (WRSTDYGVTWSK), 252–262 (YRSTDGGVTWK), and 358–368 (FRSTDGGATWK). The Proton donor role is filled by Asp-480. BNR repeat units follow at residues 533-541 (FSYDGGRNW), 577-586 (VTTDNGNSWK), 616-626 (YISTDGGLTFT), 660-671 (WRSTDGGYTFEK), and 708-718 (FRSDDAGKTWV). The 71-residue stretch at 771 to 841 (DKGLVGDLNG…LLQAIPELPK (71 aa)) folds into the Dockerin domain.

The protein belongs to the glycosyl hydrolase 74 family.

Functionally, hydrolyzes the glucosidic bonds of unbranched Glc residues in tamarind seed xyloglucan, producing XXXG, XLXG, XXLG and XLLG. Has low activity on carboxymethylcellulose, lichenan,hydroxyethylcellulose and glucuronoxylan, and no activity on xylan, polygalaturonic acid, wheat arabinoxylan, rhamnogalacturan, curdlan, laminarin, galactomannan, galactan, arabinan and pachyman or amorphous cellulose. This is Xyloglucanase Xgh74A from Acetivibrio thermocellus (strain ATCC 27405 / DSM 1237 / JCM 9322 / NBRC 103400 / NCIMB 10682 / NRRL B-4536 / VPI 7372) (Clostridium thermocellum).